Reading from the N-terminus, the 254-residue chain is Ribosomal RNA small subunit methyltransferase G (254 aa).

The disordered stretch occupies residues 1 to 21 (MPEGDGVPRETPSPSVVPESP). Residues 9-21 (RETPSPSVVPESP) are compositionally biased toward low complexity. Residues G90, L95, 142–143 (AE), and R157 contribute to the S-adenosyl-L-methionine site. The interval 230-254 (GPLRAATAPAPPGAAKRRPGKGNRR) is disordered. Positions 244-254 (AKRRPGKGNRR) are enriched in basic residues.

It belongs to the methyltransferase superfamily. RNA methyltransferase RsmG family.

The protein localises to the cytoplasm. Functionally, specifically methylates the N7 position of guanine in position 518 of 16S rRNA. The sequence is that of Ribosomal RNA small subunit methyltransferase G from Kineococcus radiotolerans (strain ATCC BAA-149 / DSM 14245 / SRS30216).